A 313-amino-acid polypeptide reads, in one-letter code: Type II methyltransferase M.NlaX (313 aa).

One can recognise an SAM-dependent MTase C5-type domain in the interval F2–V308. The active site involves C74.

Belongs to the class I-like SAM-binding methyltransferase superfamily. C5-methyltransferase family.

The catalysed reaction is a 2'-deoxycytidine in DNA + S-adenosyl-L-methionine = a 5-methyl-2'-deoxycytidine in DNA + S-adenosyl-L-homocysteine + H(+). Its function is as follows. A methylase, recognizes the double-stranded sequence 5'-CCNGG-3' and methylates C-2 on both strands. May be the equivalent of dcm in this bacteria, or it may protect the DNA from cleavage by the putative NlaXP endonuclease. The sequence is that of Type II methyltransferase M.NlaX (nlaXM) from Neisseria lactamica.